The primary structure comprises 270 residues: Tryptophan 2,3-dioxygenase-like protein (270 aa).

The protein belongs to the tryptophan 2,3-dioxygenase family.

This Xanthomonas campestris pv. campestris (strain 8004) protein is Tryptophan 2,3-dioxygenase-like protein.